Here is a 186-residue protein sequence, read N- to C-terminus: piRNA-mediated silencing protein C19orf84 (186 aa).

2 disordered regions span residues 1 to 42 and 89 to 186; these read MEQP…NSTD and SQAG…ETEY. The span at 13–22 shows a compositional bias: polar residues; the sequence is NNLSLPSSGT. Residues 24–36 show a composition bias toward pro residues; sequence PWPPAPLPAPPPL. Positions 114–126 are enriched in basic residues; the sequence is RPGWGRGLHRRGL. The segment covering 145–157 has biased composition (pro residues); that stretch reads RTPPMTLPSPPTL.

In terms of assembly, interacts with SPOCD1.

It is found in the nucleus. It localises to the nucleoplasm. In terms of biological role, protein adapter involved in piRNA-directed transposon methylation by connecting PIWIL4-piRNA and DNA methylation machineries. The PIWIL4-piRNA pathway plays a central role during spermatogenesis by directing transposon DNA methylation and silencing, thereby preventing their mobilization, which is essential for the germline integrity. This is piRNA-mediated silencing protein C19orf84 from Homo sapiens (Human).